We begin with the raw amino-acid sequence, 374 residues long: S-adenosylmethionine:tRNA ribosyltransferase-isomerase (374 aa).

Belongs to the QueA family. Monomer.

It localises to the cytoplasm. It catalyses the reaction 7-aminomethyl-7-carbaguanosine(34) in tRNA + S-adenosyl-L-methionine = epoxyqueuosine(34) in tRNA + adenine + L-methionine + 2 H(+). It functions in the pathway tRNA modification; tRNA-queuosine biosynthesis. Functionally, transfers and isomerizes the ribose moiety from AdoMet to the 7-aminomethyl group of 7-deazaguanine (preQ1-tRNA) to give epoxyqueuosine (oQ-tRNA). The sequence is that of S-adenosylmethionine:tRNA ribosyltransferase-isomerase from Prochlorococcus marinus (strain AS9601).